A 328-amino-acid polypeptide reads, in one-letter code: MKTIFSGIQPSGVITIGNYIGALRQFVELQHEYNCYFCIVDQHAITVWQDPHELRQNIRRLAAKYLAVGIDPTQATLFIQSEVPAHAQAAWMLQCIVYIGELERMTQFKEKSAGKEAVSAGLLTYPPLMAADILLYNTDIVPVGEDQKQHIELTRDLAERFNKRYGELFTIPEARIPKVGARIMSLVDPTKKMSKSDPNPKAYITLLDDAKTIEKKIKSAVTDSEGTIRYDKEAKPGISNLLNIYSTLSGQSIEELERQYEGKGYGVFKADLAQVVIETLRPIQERYHHWMESEELDRVLDEGAEKANRVASEMVRKMEQAMGLGRRR.

ATP-binding positions include Q9–S11 and G17–N18. The short motif at P10–N18 is the 'HIGH' region element. D132 is a binding site for L-tryptophan. ATP-binding positions include G144–D146, I183, and K192–S196. The short motif at K192–S196 is the 'KMSKS' region element.

The protein belongs to the class-I aminoacyl-tRNA synthetase family. Homodimer.

It localises to the cytoplasm. The catalysed reaction is tRNA(Trp) + L-tryptophan + ATP = L-tryptophyl-tRNA(Trp) + AMP + diphosphate + H(+). Inhibited by indolmycin, a competitive inhibitor for tryptophan. In terms of biological role, catalyzes the attachment of tryptophan to tRNA(Trp). This Geobacillus stearothermophilus (Bacillus stearothermophilus) protein is Tryptophan--tRNA ligase.